Here is a 1008-residue protein sequence, read N- to C-terminus: Collagen, type I, alpha 1a (1008 aa).

Positions 1 to 21 (SPAMPVPGPMGPMGPRGPPGS) are enriched in pro residues. The tract at residues 1 to 920 (SPAMPVPGPM…PQEKAPDPFR (920 aa)) is disordered. Positions 39 to 53 (NGEDGESGKPGRGGE) are enriched in basic and acidic residues. The segment covering 92–117 (TPGAMGPRGAAGAAGARGNDGAAGAA) has biased composition (low complexity). Over residues 119–132 (PPGPTGPAGPPGFP) the composition is skewed to pro residues. Residues 133-151 (GGPGAKGDAGAQGGRGPEG) show a composition bias toward gly residues. 2 stretches are compositionally biased toward low complexity: residues 152–195 (PAGA…AGAP) and 204–230 (SGPQ…APGV). Gly residues predominate over residues 253 to 265 (GARGGPGGRGFPG). 2 stretches are compositionally biased toward low complexity: residues 339 to 354 (VGAR…PGPK) and 410 to 422 (LPGE…PAGA). Residues 423–435 (RGDRGFPGERGAK) show a composition bias toward basic and acidic residues. Low complexity-rich tracts occupy residues 437–456 (DAGA…QGMP), 489–524 (RGLT…ARGA), and 537–573 (AGFA…AGPT). Residues 604 to 617 (PPGPSGNPGPPGPA) show a composition bias toward pro residues. Over residues 634–661 (PAGRPGELGAAGPPGPAGEKGSPGSEGA) the composition is skewed to low complexity. Gly residues predominate over residues 696 to 709 (GEAGGPSGPGGERG). Residues 717-735 (PGLAGAPGEPGREGSPGNE) show a composition bias toward low complexity. Over residues 761-771 (APGPPGAPGPV) the composition is skewed to pro residues. The span at 785–806 (PAGPAGSAGPSGPRGPAGAPGL) shows a compositional bias: low complexity. The span at 807–821 (RGDKGESGEAGERRG) shows a compositional bias: basic and acidic residues. Residues 832-868 (SGSSGEQGPAGAAGPAGPRGPAGSAGSPGKDGMSGLP) are compositionally biased toward low complexity. A compositionally biased stretch (pro residues) spans 884 to 896 (AGPPGPPGPPGAP). The Fibrillar collagen NC1 domain maps to 978 to 1008 (TSRLPLLDLAPMDVGAPDQEFGLEVGPVCFL).

Belongs to the fibrillar collagen family.

The protein localises to the secreted. Its subcellular location is the extracellular space. It localises to the extracellular matrix. The protein is Collagen, type I, alpha 1a of Epinephelus aeneus (White grouper).